We begin with the raw amino-acid sequence, 369 residues long: Probable serine/threonine-protein kinase DDB_G0291350 (369 aa).

The Protein kinase domain maps to 22–367 (YTVNRILGEG…QVIERINQII (346 aa)). ATP-binding positions include 28–36 (LGEGGFSFV) and K51. The active-site Proton acceptor is D159. A disordered region spans residues 169 to 225 (NLRRPSNNNNNNNNNNNNNNNNNNNNNNNNNNNNNNNNNNNNNNNNNNNNNNNSEDS). Positions 175 to 221 (NNNNNNNNNNNNNNNNNNNNNNNNNNNNNNNNNNNNNNNNNNNNNNN) are enriched in low complexity.

It belongs to the protein kinase superfamily. Ser/Thr protein kinase family.

It catalyses the reaction L-seryl-[protein] + ATP = O-phospho-L-seryl-[protein] + ADP + H(+). The enzyme catalyses L-threonyl-[protein] + ATP = O-phospho-L-threonyl-[protein] + ADP + H(+). This Dictyostelium discoideum (Social amoeba) protein is Probable serine/threonine-protein kinase DDB_G0291350.